The primary structure comprises 338 residues: Oligopeptide transport ATP-binding protein OppD (338 aa).

An ABC transporter domain is found at 7-257 (LEAKQVSVAF…PKHPYTRSLL (251 aa)). 43–50 (GESGSGKS) is an ATP binding site.

The protein belongs to the ABC transporter superfamily. The complex is composed of two ATP-binding proteins (OppD and OppF), two transmembrane proteins (OppB and OppC) and a solute-binding protein (OppA).

It is found in the cell membrane. The catalysed reaction is a [peptide](out) + ATP + H2O = a [peptide](in) + ADP + phosphate + H(+). Part of the ABC transporter complex OppABCDF involved in the uptake of oligopeptides. Probably responsible for energy coupling to the transport system. Essential for uptake of peptides larger than three amino acids and for growth in milk. This chain is Oligopeptide transport ATP-binding protein OppD, found in Lactococcus lactis subsp. cremoris (strain SK11).